The sequence spans 257 residues: Protein IMPACT homolog (257 aa).

One can recognise an RWD domain in the interval 9–102 (AEIESLASIF…SLVQDFIRDL (94 aa)).

This sequence belongs to the IMPACT family. In terms of assembly, interacts with gcn-1; prevents the interaction of gcn-1 with gcn-2 and inhibits gcn-2 kinase activity. Interaction with rpl-39; this interaction occurs in a gcn-1-independent manner. Associates with ribosomes; this interaction occurs in a gcn-1-independent manner. Associates with actin; this interaction occurs in a gcn-1-independent manner.

It is found in the cytoplasm. Translational regulator that ensures constant high levels of translation under amino acid starvation. Plays a role as a negative regulator of the gcn-2 kinase activity; impairs gcn-1-mediated gcn-2 activation, and hence gcn-2-mediated eIF-2-alpha phosphorylation and subsequent down-regulation of protein synthesis in amino acid-starved cells. Plays a role in differentiation of neuronal cells by stimulating neurite outgrowth. The sequence is that of Protein IMPACT homolog from Caenorhabditis elegans.